The following is a 339-amino-acid chain: Biotin synthase (339 aa).

Residues Ser51 to Arg278 form the Radical SAM core domain. 3 residues coordinate [4Fe-4S] cluster: Cys66, Cys70, and Cys73. [2Fe-2S] cluster contacts are provided by Cys110, Cys141, Cys201, and Arg273.

The protein belongs to the radical SAM superfamily. Biotin synthase family. Homodimer. [4Fe-4S] cluster is required as a cofactor. The cofactor is [2Fe-2S] cluster.

It carries out the reaction (4R,5S)-dethiobiotin + (sulfur carrier)-SH + 2 reduced [2Fe-2S]-[ferredoxin] + 2 S-adenosyl-L-methionine = (sulfur carrier)-H + biotin + 2 5'-deoxyadenosine + 2 L-methionine + 2 oxidized [2Fe-2S]-[ferredoxin]. It participates in cofactor biosynthesis; biotin biosynthesis; biotin from 7,8-diaminononanoate: step 2/2. Its function is as follows. Catalyzes the conversion of dethiobiotin (DTB) to biotin by the insertion of a sulfur atom into dethiobiotin via a radical-based mechanism. In Herminiimonas arsenicoxydans, this protein is Biotin synthase.